The following is a 538-amino-acid chain: Phosphoenolpyruvate carboxykinase (ATP) (538 aa).

The substrate site is built by Arg62, Tyr203, and Lys209. ATP contacts are provided by residues Lys209, His228, and 244–252; that span reads GLSGTGKTT. Mn(2+) contacts are provided by Lys209 and His228. Position 265 (Asp265) interacts with Mn(2+). ATP-binding positions include Glu293, Arg329, 445-446, and Thr451; that span reads RI. Residue Arg329 coordinates substrate.

The protein belongs to the phosphoenolpyruvate carboxykinase (ATP) family. As to quaternary structure, monomer. Mn(2+) is required as a cofactor.

The protein localises to the cytoplasm. The catalysed reaction is oxaloacetate + ATP = phosphoenolpyruvate + ADP + CO2. The protein operates within carbohydrate biosynthesis; gluconeogenesis. Its function is as follows. Involved in the gluconeogenesis. Catalyzes the conversion of oxaloacetate (OAA) to phosphoenolpyruvate (PEP) through direct phosphoryl transfer between the nucleoside triphosphate and OAA. In Haemophilus ducreyi (strain 35000HP / ATCC 700724), this protein is Phosphoenolpyruvate carboxykinase (ATP).